The sequence spans 109 residues: Small ribosomal subunit protein eS25 (109 aa).

The segment covering 1-13 (MVKKIQESKEKKA) has biased composition (basic and acidic residues). The tract at residues 1–34 (MVKKIQESKEKKALKAASGTRKDKKKWGDGRKKE) is disordered.

It belongs to the eukaryotic ribosomal protein eS25 family.

The sequence is that of Small ribosomal subunit protein eS25 (RPS25-1) from Encephalitozoon cuniculi (strain GB-M1) (Microsporidian parasite).